A 506-amino-acid chain; its full sequence is Exopolyphosphatase (506 aa).

This sequence belongs to the GppA/Ppx family. In terms of assembly, homodimer. Mg(2+) serves as cofactor.

The protein resides in the cell membrane. It carries out the reaction [phosphate](n) + H2O = [phosphate](n-1) + phosphate + H(+). It catalyses the reaction [phosphate](n) + ATP = [phosphate](n+1) + ADP. With respect to regulation, exopolyphosphatase activity is stimulated by NH(4)(+) and K(+). Phosphotransferase activity is insensitive to the addition of K(+) or NH(4)(+) ions. Functionally, degradation of inorganic polyphosphates (polyP). Releases orthophosphate processively from the ends of the polyP chain. Also has polyphosphate:ADP phosphotransferase activity, catalyzing the production of ATP from ADP and polyP. This Pseudomonas aeruginosa (strain ATCC 15692 / DSM 22644 / CIP 104116 / JCM 14847 / LMG 12228 / 1C / PRS 101 / PAO1) protein is Exopolyphosphatase.